The sequence spans 144 residues: 3-dehydroquinate dehydratase (144 aa).

Tyr22 acts as the Proton acceptor in catalysis. Substrate-binding residues include Asn74, His80, and Asp87. His100 (proton donor) is an active-site residue. Substrate-binding positions include 101–102 (LS) and Arg111.

This sequence belongs to the type-II 3-dehydroquinase family. In terms of assembly, homododecamer.

It catalyses the reaction 3-dehydroquinate = 3-dehydroshikimate + H2O. It functions in the pathway metabolic intermediate biosynthesis; chorismate biosynthesis; chorismate from D-erythrose 4-phosphate and phosphoenolpyruvate: step 3/7. Catalyzes a trans-dehydration via an enolate intermediate. This chain is 3-dehydroquinate dehydratase, found in Clostridium perfringens (strain ATCC 13124 / DSM 756 / JCM 1290 / NCIMB 6125 / NCTC 8237 / Type A).